The primary structure comprises 212 residues: Pyrrolidone-carboxylate peptidase (212 aa).

Residues E80, C143, and H165 contribute to the active site.

This sequence belongs to the peptidase C15 family. In terms of assembly, homotetramer.

The protein localises to the cytoplasm. The enzyme catalyses Release of an N-terminal pyroglutamyl group from a polypeptide, the second amino acid generally not being Pro.. In terms of biological role, removes 5-oxoproline from various penultimate amino acid residues except L-proline. The chain is Pyrrolidone-carboxylate peptidase from Aliivibrio fischeri (strain MJ11) (Vibrio fischeri).